We begin with the raw amino-acid sequence, 423 residues long: Histidine--tRNA ligase (423 aa).

It belongs to the class-II aminoacyl-tRNA synthetase family. In terms of assembly, homodimer.

Its subcellular location is the cytoplasm. The catalysed reaction is tRNA(His) + L-histidine + ATP = L-histidyl-tRNA(His) + AMP + diphosphate + H(+). In Haemophilus influenzae (strain PittEE), this protein is Histidine--tRNA ligase.